Here is a 192-residue protein sequence, read N- to C-terminus: Thymidylate kinase (192 aa).

7-14 (GIDCVGKS) provides a ligand contact to ATP.

This sequence belongs to the thymidylate kinase family.

The enzyme catalyses dTMP + ATP = dTDP + ADP. Phosphorylation of dTMP to form dTDP in both de novo and salvage pathways of dTTP synthesis. This is Thymidylate kinase from Campylobacter jejuni subsp. jejuni serotype O:23/36 (strain 81-176).